Here is a 188-residue protein sequence, read N- to C-terminus: dCTP deaminase (188 aa).

DCTP-binding positions include 111–116 (KSTYAR), 135–137 (TLE), Q156, Y170, and Q180. The Proton donor/acceptor role is filled by E137.

It belongs to the dCTP deaminase family. As to quaternary structure, homotrimer.

It carries out the reaction dCTP + H2O + H(+) = dUTP + NH4(+). The protein operates within pyrimidine metabolism; dUMP biosynthesis; dUMP from dCTP (dUTP route): step 1/2. Functionally, catalyzes the deamination of dCTP to dUTP. In Chromohalobacter salexigens (strain ATCC BAA-138 / DSM 3043 / CIP 106854 / NCIMB 13768 / 1H11), this protein is dCTP deaminase.